Here is a 393-residue protein sequence, read N- to C-terminus: Decapping nuclease dom-3 (393 aa).

The segment at 1–37 is disordered; it reads MSHYGGNPRGNSSHQFGRKDFQQSDSKHIPKITGQPL. Basic and acidic residues predominate over residues 17–28; sequence GRKDFQQSDSKH. Substrate contacts are provided by residues Arg-74, Glu-113, and 144–146; that span reads WRG. 5 residues coordinate Mg(2+): Glu-205, Glu-257, Asp-259, Glu-269, and Leu-270. Substrate is bound at residue Glu-257. Substrate contacts are provided by Lys-271 and Gln-293.

Belongs to the DXO/Dom3Z family. The cofactor is Mg(2+).

The catalysed reaction is a 5'-end NAD(+)-phospho-ribonucleoside in mRNA + H2O = a 5'-end phospho-ribonucleoside in mRNA + NAD(+) + H(+). The enzyme catalyses a 5'-end (N(7)-methyl 5'-triphosphoguanosine)-ribonucleoside-ribonucleotide in mRNA + H2O = a (N(7)-methyl 5'-triphosphoguanosine)-nucleoside + a 5'-end phospho-ribonucleoside in mRNA + H(+). It catalyses the reaction a 5'-end triphospho-ribonucleoside in mRNA + H2O = a 5'-end phospho-ribonucleoside in mRNA + diphosphate + H(+). Its function is as follows. Decapping enzyme for NAD-capped RNAs: specifically hydrolyzes the nicotinamide adenine dinucleotide (NAD) cap from a subset of RNAs by removing the entire NAD moiety from the 5'-end of an NAD-capped RNA. The NAD-cap is present at the 5'-end of some RNAs and snoRNAs. In contrast to the canonical 5'-end N7 methylguanosine (m7G) cap, the NAD cap promotes mRNA decay. Also acts as a non-canonical decapping enzyme that removes the entire cap structure of m7G capped or incompletely capped RNAs and mediates their subsequent degradation. Specifically degrades pre-mRNAs with a defective 5'-end m7G cap and is part of a pre-mRNA capping quality control. Also possesses RNA 5'-pyrophosphohydrolase activity by hydrolyzing the 5'-end triphosphate to release pyrophosphates. The polypeptide is Decapping nuclease dom-3 (Caenorhabditis elegans).